A 260-amino-acid polypeptide reads, in one-letter code: NADH-ubiquinone oxidoreductase chain 6 (260 aa).

6 consecutive transmembrane segments (helical) span residues 2–22 (LTNYLLIIFCFLALFCSFMII), 30–50 (SILYLILVFCNVTFVLIILGV), 52–72 (FIAIIFLIVYVGAIAVLFLFV), 101–121 (FLFQLFTFVFNFSVVEVFGLF), 142–162 (VPSGLLINGIYIFPNLSNLGI), and 211–231 (FFIFLVVSLILLISMIGSIIL).

This sequence belongs to the complex I subunit 6 family.

The protein resides in the mitochondrion membrane. The enzyme catalyses a ubiquinone + NADH + 5 H(+)(in) = a ubiquinol + NAD(+) + 4 H(+)(out). Functionally, core subunit of the mitochondrial membrane respiratory chain NADH dehydrogenase (Complex I) that is believed to belong to the minimal assembly required for catalysis. Complex I functions in the transfer of electrons from NADH to the respiratory chain. The immediate electron acceptor for the enzyme is believed to be ubiquinone. The chain is NADH-ubiquinone oxidoreductase chain 6 (ND6) from Acanthamoeba castellanii (Amoeba).